The sequence spans 364 residues: Fructose-bisphosphate aldolase B (364 aa).

Ala-2 carries the N-acetylalanine modification. Lys-13 is subject to N6-succinyllysine. Ser-36 is modified (phosphoserine). A Phosphothreonine modification is found at Thr-39. Beta-D-fructose 1,6-bisphosphate is bound at residue Arg-43. Position 119 is a phosphothreonine (Thr-119). Lys-121 is subject to N6-succinyllysine. Ser-132 bears the Phosphoserine mark. Glu-188 acts as the Proton acceptor in catalysis. Lys-230 (schiff-base intermediate with dihydroxyacetone-P) is an active-site residue. Phosphoserine occurs at positions 272, 276, 299, and 301. 272–274 (SGG) is a beta-D-fructose 1,6-bisphosphate binding site. A beta-D-fructose 1,6-bisphosphate-binding site is contributed by Arg-304. Ser-309 carries the post-translational modification Phosphoserine. Lys-317 bears the N6-succinyllysine mark.

It belongs to the class I fructose-bisphosphate aldolase family. In terms of assembly, homotetramer. Interacts with BBS1, BBS2, BBS4 and BBS7. Forms a ternary complex with G6PD and TP53; this interaction is direct.

The protein resides in the cytoplasm. It localises to the cytosol. Its subcellular location is the cytoskeleton. It is found in the microtubule organizing center. The protein localises to the centrosome. The protein resides in the centriolar satellite. It catalyses the reaction beta-D-fructose 1,6-bisphosphate = D-glyceraldehyde 3-phosphate + dihydroxyacetone phosphate. The enzyme catalyses beta-D-fructose 1-phosphate = D-glyceraldehyde + dihydroxyacetone phosphate. Its pathway is carbohydrate degradation; glycolysis; D-glyceraldehyde 3-phosphate and glycerone phosphate from D-glucose: step 4/4. It functions in the pathway carbohydrate biosynthesis; gluconeogenesis. It participates in carbohydrate metabolism; fructose metabolism. Functionally, catalyzes the aldol cleavage of fructose 1,6-biphosphate to form two triosephosphates dihydroxyacetone phosphate and D-glyceraldehyde 3-phosphate in glycolysis as well as the reverse stereospecific aldol addition reaction in gluconeogenesis. In fructolysis, metabolizes fructose 1-phosphate derived from the phosphorylation of dietary fructose by fructokinase into dihydroxyacetone phosphate and D-glyceraldehyde. Acts as an adapter independently of its enzymatic activity, exerts a tumor suppressor role by stabilizing the ternary complex with G6PD and TP53 to inhibit G6PD activity and keep oxidative pentose phosphate metabolism in check. In Bos taurus (Bovine), this protein is Fructose-bisphosphate aldolase B (ALDOB).